A 441-amino-acid chain; its full sequence is Baicalein 7-O-glucuronosyltransferase (441 aa).

This sequence belongs to the UDP-glycosyltransferase family. Homodimer.

The catalysed reaction is baicalein + UDP-alpha-D-glucuronate = baicalin + UDP. Its activity is regulated as follows. Inhibited by copper, zinc and iron, p-Chloromercuri-benzoic acid (PCMBA) and 4,4'-diisothiocyanostilbene-2,2'-disulfonic acid (DIDS), but not by N-ethylmaleimide (NEM), dithioerythritol (DTE), calcium or magnesium. In terms of biological role, involved in the production of glucuronosylated baicalein, a flavonoid that shows antiallergic, anti-HIV and antitumor activities. Can use baicalein, scutellarein and wogonin as substrates, but not chrysin, apigenin, luteolin, quercetin, formononetin and daidzein. Highly specific for UDP-glucuronate (UDP-GlcUA) and no activity with UDP-glucose or UDP-galacturonic acid. This Scutellaria baicalensis (Baical skullcap) protein is Baicalein 7-O-glucuronosyltransferase (UBGAT-I).